The following is a 354-amino-acid chain: Probable mannitol dehydrogenase 1 (354 aa).

7 residues coordinate Zn(2+): Cys43, His65, Cys96, Cys99, Cys102, Cys110, and Cys158.

The protein belongs to the zinc-containing alcohol dehydrogenase family. It depends on Zn(2+) as a cofactor.

The catalysed reaction is D-mannitol + NAD(+) = D-mannose + NADH + H(+). In terms of biological role, oxidizes mannitol to mannose. Provides the initial step by which translocated mannitol is committed to central metabolism and, by regulating mannitol pool size, is important in regulating salt tolerance at the cellular level. The polypeptide is Probable mannitol dehydrogenase 1 (CAD1) (Stylosanthes humilis (Townsville stylo)).